We begin with the raw amino-acid sequence, 911 residues long: Alpha-actinin-4 (911 aa).

The interval 1 to 269 (MVDYHAANQA…YVSSFYHAFS (269 aa)) is actin-binding. Residues 12–26 (QYGPSSGGNGTGGGG) form an interaction with VCL region. A disordered region spans residues 12–31 (QYGPSSGGNGTGGGGGMGDY). A compositionally biased stretch (gly residues) spans 16–29 (SSGGNGTGGGGGMG). Tyrosine 31 carries the post-translational modification Phosphotyrosine. Residues 40-61 (RDLLLDPAWEKQQRKTFTAWCN) form an interaction with VCL region. Calponin-homology (CH) domains lie at 50-154 (KQQR…LRFA) and 163-269 (TSAK…HAFS). Positions 84-88 (LMLLL) match the LXXLL motif motif. Positions 108–126 (KINNVNKALDFIASKGVKL) are interaction with VCL. N6-acetyllysine is present on lysine 114. A polyphosphoinositide (PIP2)-binding region spans residues 177-192 (TAPYKNVNVQNFHISW). The residue at position 214 (lysine 214) is an N6-acetyllysine. Threonine 249 is subject to Phosphothreonine. 4 Spectrin repeats span residues 293–403 (HLME…WLLN), 413–518 (HLAE…ALEK), 528–639 (QLHL…ALLE), and 649–752 (HLRR…EVEN). Residues lysine 592 and lysine 625 each carry the N6-acetyllysine modification. Serine 696 is modified (phosphoserine). A mediates interaction with MICALL2 region spans residues 736 to 911 (WEQLLTTIAR…STALYGESDL (176 aa)). 2 consecutive EF-hand domains span residues 765–800 (EQMQ…LGYD) and 806–841 (QGDA…ETTD). Aspartate 778 lines the Ca(2+) pocket. Lysine 779 is subject to N6-acetyllysine. Aspartate 780 and glutamate 789 together coordinate Ca(2+). At lysine 859 the chain carries N6-acetyllysine. Phosphoserine is present on serine 909.

This sequence belongs to the alpha-actinin family. Homodimer; antiparallel. Interacts with MAGI1. Interacts with MICALL2 (preferentially in opened conformation); stimulated by RAB13 activation. Identified in a IGF2BP1-dependent mRNP granule complex containing untranslated mRNAs. Component of the CART complex, at least composed of ACTN4, HGS/HRS, MYO5B and TRIM3. Binds TRIM3 at the N-terminus. Interacts with PDLIM2. Identified in a complex with CASK, IQGAP1, MAGI2, NPHS1, SPTAN1 and SPTBN1. Interacts with PPARG and RARA. Binds to VCL; this interaction triggers VCL conformational changes. Interacts with SEPTIN14. Interacts with IGSF8. As to expression, expressed in the foot process layer of podocytes in the kidney glomerulus but not in tubules (at protein level).

Its subcellular location is the nucleus. The protein localises to the cytoplasm. The protein resides in the cell junction. It is found in the cytoskeleton. It localises to the stress fiber. Its subcellular location is the perinuclear region. Its function is as follows. F-actin cross-linking protein which is thought to anchor actin to a variety of intracellular structures. This is a bundling protein. Probably involved in vesicular trafficking via its association with the CART complex. The CART complex is necessary for efficient transferrin receptor recycling but not for EGFR degradation. Involved in tight junction assembly in epithelial cells probably through interaction with MICALL2. Links MICALL2 to the actin cytoskeleton and recruits it to the tight junctions. May also function as a transcriptional coactivator, stimulating transcription mediated by the nuclear hormone receptors PPARG and RARA. Association with IGSF8 regulates the immune synapse formation and is required for efficient T-cell activation. This Rattus norvegicus (Rat) protein is Alpha-actinin-4.